Reading from the N-terminus, the 251-residue chain is Probable ATP-dependent transporter ycf16 (251 aa).

Residues 6 to 250 form the ABC transporter domain; sequence LEIKDLYASV…EKHGYDWITQ (245 aa). ATP is bound at residue 38–45; that stretch reads GPNGSGKS.

The protein belongs to the ABC transporter superfamily. Ycf16 family.

The protein resides in the plastid. Its subcellular location is the chloroplast. The polypeptide is Probable ATP-dependent transporter ycf16 (ycf16) (Pyropia yezoensis (Susabi-nori)).